Here is a 215-residue protein sequence, read N- to C-terminus: Pyridoxine/pyridoxamine 5'-phosphate oxidase (215 aa).

Residues 9–12 (RKEY) and Lys-67 contribute to the substrate site. FMN contacts are provided by residues 62 to 67 (RIVLLK), 77 to 78 (YT), Lys-84, and Gln-106. Residues Tyr-124, Arg-128, and Ser-132 each contribute to the substrate site. Residues 141-142 (QS) and Trp-187 contribute to the FMN site. 193 to 195 (RLH) is a binding site for substrate. Residue Arg-197 participates in FMN binding.

The protein belongs to the pyridoxamine 5'-phosphate oxidase family. In terms of assembly, homodimer. FMN serves as cofactor.

The catalysed reaction is pyridoxamine 5'-phosphate + O2 + H2O = pyridoxal 5'-phosphate + H2O2 + NH4(+). It carries out the reaction pyridoxine 5'-phosphate + O2 = pyridoxal 5'-phosphate + H2O2. It participates in cofactor metabolism; pyridoxal 5'-phosphate salvage; pyridoxal 5'-phosphate from pyridoxamine 5'-phosphate: step 1/1. The protein operates within cofactor metabolism; pyridoxal 5'-phosphate salvage; pyridoxal 5'-phosphate from pyridoxine 5'-phosphate: step 1/1. Functionally, catalyzes the oxidation of either pyridoxine 5'-phosphate (PNP) or pyridoxamine 5'-phosphate (PMP) into pyridoxal 5'-phosphate (PLP). The sequence is that of Pyridoxine/pyridoxamine 5'-phosphate oxidase from Cytophaga hutchinsonii (strain ATCC 33406 / DSM 1761 / CIP 103989 / NBRC 15051 / NCIMB 9469 / D465).